The following is a 266-amino-acid chain: Killer cell lectin-like receptor 8 (266 aa).

Residues 1–44 lie on the Cytoplasmic side of the membrane; the sequence is MSEQEVTFPTMRFHKSSGLNSQVRLEGTQRSRKAGLRVCSVPWQ. A helical; Signal-anchor for type II membrane protein transmembrane segment spans residues 45 to 66; that stretch reads LIVIALGILCSLRLVIVAVFVT. At 67 to 266 the chain is on the extracellular side; the sequence is KFFQYSQHKQ…CGKKLDKFPD (200 aa). 2 N-linked (GlcNAc...) asparagine glycosylation sites follow: Asn-87 and Asn-104. In terms of domain architecture, C-type lectin spans 143-261; it reads GVKYWFCYGT…PYYCICGKKL (119 aa). Cystine bridges form between Cys-149/Cys-154, Cys-167/Cys-255, Cys-171/Cys-257, and Cys-236/Cys-249.

As to quaternary structure, homodimer; disulfide-linked. Interacts with the adapter protein TYROBP/DAP12; the interaction leads to natural killer cell activation.

The protein resides in the cell membrane. In terms of biological role, receptor on natural killer (NK) cells for class I MHC. The chain is Killer cell lectin-like receptor 8 (Klra8) from Mus musculus (Mouse).